The sequence spans 414 residues: DNA primase small subunit PriS (414 aa).

Residues aspartate 98, aspartate 100, and aspartate 312 contribute to the active site.

The protein belongs to the eukaryotic-type primase small subunit family. Heterodimer of a small subunit (PriS) and a large subunit (PriL). Mg(2+) is required as a cofactor. Requires Mn(2+) as cofactor.

Catalytic subunit of DNA primase, an RNA polymerase that catalyzes the synthesis of short RNA molecules used as primers for DNA polymerase during DNA replication. The small subunit contains the primase catalytic core and has DNA synthesis activity on its own. Binding to the large subunit stabilizes and modulates the activity, increasing the rate of DNA synthesis while decreasing the length of the DNA fragments, and conferring RNA synthesis capability. The DNA polymerase activity may enable DNA primase to also catalyze primer extension after primer synthesis. May also play a role in DNA repair. The sequence is that of DNA primase small subunit PriS from Methanosarcina mazei (strain ATCC BAA-159 / DSM 3647 / Goe1 / Go1 / JCM 11833 / OCM 88) (Methanosarcina frisia).